Here is a 355-residue protein sequence, read N- to C-terminus: Lamassu protein LmuA (355 aa).

Component of antiviral defense system Lamassu type II, composed of LmuA and LmuB. Expression of Lamassu type II in B.subtilis (strain BEST7003) confers resistance to phage SpBeta. May be a nuclease. The protein is Lamassu protein LmuA of Bacillus cereus (strain VD014).